Reading from the N-terminus, the 320-residue chain is Beta-ketoacyl-[acyl-carrier-protein] synthase III (320 aa).

Residues C114 and H247 contribute to the active site. The tract at residues 248–252 (QANRR) is ACP-binding. N277 is an active-site residue.

The protein belongs to the thiolase-like superfamily. FabH family. Homodimer.

The protein resides in the cytoplasm. It catalyses the reaction malonyl-[ACP] + acetyl-CoA + H(+) = 3-oxobutanoyl-[ACP] + CO2 + CoA. It participates in lipid metabolism; fatty acid biosynthesis. Functionally, catalyzes the condensation reaction of fatty acid synthesis by the addition to an acyl acceptor of two carbons from malonyl-ACP. Catalyzes the first condensation reaction which initiates fatty acid synthesis and may therefore play a role in governing the total rate of fatty acid production. Possesses both acetoacetyl-ACP synthase and acetyl transacylase activities. Its substrate specificity determines the biosynthesis of branched-chain and/or straight-chain of fatty acids. This Neisseria gonorrhoeae (strain ATCC 700825 / FA 1090) protein is Beta-ketoacyl-[acyl-carrier-protein] synthase III.